We begin with the raw amino-acid sequence, 394 residues long: Elongation factor Tu 1 (394 aa).

The tr-type G domain maps to lysine 10 to glutamate 204. Residues glycine 19–threonine 26 are G1. Residue glycine 19–threonine 26 coordinates GTP. Residue threonine 26 coordinates Mg(2+). The segment at glycine 60 to asparagine 64 is G2. The G3 stretch occupies residues aspartate 81 to glycine 84. GTP contacts are provided by residues aspartate 81 to histidine 85 and asparagine 136 to aspartate 139. The tract at residues asparagine 136–aspartate 139 is G4. Residues serine 174–leucine 176 are G5.

It belongs to the TRAFAC class translation factor GTPase superfamily. Classic translation factor GTPase family. EF-Tu/EF-1A subfamily. As to quaternary structure, monomer.

The protein resides in the cytoplasm. It catalyses the reaction GTP + H2O = GDP + phosphate + H(+). In terms of biological role, GTP hydrolase that promotes the GTP-dependent binding of aminoacyl-tRNA to the A-site of ribosomes during protein biosynthesis. This Serratia proteamaculans (strain 568) protein is Elongation factor Tu 1.